The primary structure comprises 1385 residues: Probable serine/threonine-protein kinase DDB_G0268876 (1385 aa).

A Protein kinase domain is found at 758–1008; that stretch reads LELTKEIGRG…QQIITYLENL (251 aa). ATP-binding positions include 764–772 and Lys-785; that span reads IGRGVSGVV. The Proton acceptor role is filled by Asp-878. Disordered stretches follow at residues 1040 to 1074, 1091 to 1266, and 1287 to 1339; these read GGNS…ENKI, EVSK…SVGG, and ISSS…NNNN. The span at 1055–1073 shows a compositional bias: polar residues; sequence VSGSNNNESSTAVSLNENK. A compositionally biased stretch (low complexity) spans 1107–1144; the sequence is SSSTSSSPSTLSAPQSPVGSTSPMGSTSTSPISNNNNR. Residues 1145–1162 show a composition bias toward basic and acidic residues; it reads PTHDHQQPHQVKWERIVP. Composition is skewed to low complexity over residues 1189 to 1232, 1242 to 1266, and 1295 to 1339; these read NNNN…SSGI, FLSS…SVGG, and NNNN…NNNN.

The protein belongs to the protein kinase superfamily. TKL Ser/Thr protein kinase family.

The catalysed reaction is L-seryl-[protein] + ATP = O-phospho-L-seryl-[protein] + ADP + H(+). The enzyme catalyses L-threonyl-[protein] + ATP = O-phospho-L-threonyl-[protein] + ADP + H(+). The polypeptide is Probable serine/threonine-protein kinase DDB_G0268876 (Dictyostelium discoideum (Social amoeba)).